The primary structure comprises 319 residues: Beta-ketoacyl-[acyl-carrier-protein] synthase III (319 aa).

Active-site residues include Cys-113 and His-246. The interval 247-251 (QANIR) is ACP-binding. Asn-276 is a catalytic residue.

Belongs to the thiolase-like superfamily. FabH family. As to quaternary structure, homodimer.

The protein resides in the cytoplasm. It catalyses the reaction malonyl-[ACP] + acetyl-CoA + H(+) = 3-oxobutanoyl-[ACP] + CO2 + CoA. Its pathway is lipid metabolism; fatty acid biosynthesis. In terms of biological role, catalyzes the condensation reaction of fatty acid synthesis by the addition to an acyl acceptor of two carbons from malonyl-ACP. Catalyzes the first condensation reaction which initiates fatty acid synthesis and may therefore play a role in governing the total rate of fatty acid production. Possesses both acetoacetyl-ACP synthase and acetyl transacylase activities. Its substrate specificity determines the biosynthesis of branched-chain and/or straight-chain of fatty acids. In Ehrlichia canis (strain Jake), this protein is Beta-ketoacyl-[acyl-carrier-protein] synthase III.